The primary structure comprises 194 residues: Imidazoleglycerol-phosphate dehydratase (194 aa).

Belongs to the imidazoleglycerol-phosphate dehydratase family.

Its subcellular location is the cytoplasm. The catalysed reaction is D-erythro-1-(imidazol-4-yl)glycerol 3-phosphate = 3-(imidazol-4-yl)-2-oxopropyl phosphate + H2O. The protein operates within amino-acid biosynthesis; L-histidine biosynthesis; L-histidine from 5-phospho-alpha-D-ribose 1-diphosphate: step 6/9. This is Imidazoleglycerol-phosphate dehydratase from Thermoanaerobacter sp. (strain X514).